Here is a 171-residue protein sequence, read N- to C-terminus: Adenine phosphoribosyltransferase (171 aa).

This sequence belongs to the purine/pyrimidine phosphoribosyltransferase family. In terms of assembly, homodimer.

It localises to the cytoplasm. The catalysed reaction is AMP + diphosphate = 5-phospho-alpha-D-ribose 1-diphosphate + adenine. It participates in purine metabolism; AMP biosynthesis via salvage pathway; AMP from adenine: step 1/1. Functionally, catalyzes a salvage reaction resulting in the formation of AMP, that is energically less costly than de novo synthesis. The protein is Adenine phosphoribosyltransferase of Gloeobacter violaceus (strain ATCC 29082 / PCC 7421).